The chain runs to 435 residues: Adenylosuccinate synthetase (435 aa).

Residues 17-23 and 45-47 contribute to the GTP site; these read GDEGKGK and GHT. Aspartate 18 acts as the Proton acceptor in catalysis. Mg(2+)-binding residues include aspartate 18 and glycine 45. Residues 18–21, 43–46, threonine 135, arginine 149, glutamine 230, threonine 245, and arginine 309 contribute to the IMP site; these read DEGK and NAGH. The active-site Proton donor is histidine 46. Substrate is bound at residue 305 to 311; it reads TVSGRAR. GTP contacts are provided by residues arginine 311, 337 to 339, and 419 to 421; these read LLD and SVG.

This sequence belongs to the adenylosuccinate synthetase family. Homodimer. Mg(2+) serves as cofactor.

Its subcellular location is the cytoplasm. The catalysed reaction is IMP + L-aspartate + GTP = N(6)-(1,2-dicarboxyethyl)-AMP + GDP + phosphate + 2 H(+). It functions in the pathway purine metabolism; AMP biosynthesis via de novo pathway; AMP from IMP: step 1/2. In terms of biological role, plays an important role in the de novo pathway of purine nucleotide biosynthesis. Catalyzes the first committed step in the biosynthesis of AMP from IMP. This Spiroplasma citri protein is Adenylosuccinate synthetase.